We begin with the raw amino-acid sequence, 376 residues long: Glucose-1-phosphate adenylyltransferase (376 aa).

Residues Tyr101, Gly166, 181-182 (EK), and Ser192 contribute to the alpha-D-glucose 1-phosphate site.

This sequence belongs to the bacterial/plant glucose-1-phosphate adenylyltransferase family. As to quaternary structure, homotetramer.

The enzyme catalyses alpha-D-glucose 1-phosphate + ATP + H(+) = ADP-alpha-D-glucose + diphosphate. It participates in glycan biosynthesis; glycogen biosynthesis. In terms of biological role, involved in the biosynthesis of ADP-glucose, a building block required for the elongation reactions to produce glycogen. Catalyzes the reaction between ATP and alpha-D-glucose 1-phosphate (G1P) to produce pyrophosphate and ADP-Glc. The polypeptide is Glucose-1-phosphate adenylyltransferase (Bacillus cereus (strain ATCC 10987 / NRS 248)).